We begin with the raw amino-acid sequence, 354 residues long: Putative F-box/kelch-repeat protein At5g03000 (354 aa).

The F-box domain occupies 37–86; it reads PTVFSSLPDELILNCLARVSRFYRPSLSLVNKEFQSLIASPDLEATRSRI. Kelch repeat units follow at residues 143-189 and 190-236; these read EIYI…VIDG and KIYV…FPGK.

This is Putative F-box/kelch-repeat protein At5g03000 from Arabidopsis thaliana (Mouse-ear cress).